We begin with the raw amino-acid sequence, 585 residues long: Tyramine beta-hydroxylase (585 aa).

Residues 1-21 (MKCANAAALLFFVLCDIGVHG) form the signal peptide. A DOMON domain is found at 31–142 (SNVTVKWQTD…GTTQFYIAAS (112 aa)). Asparagine 32 and asparagine 71 each carry an N-linked (GlcNAc...) asparagine glycan. Tyrosine 206 is a catalytic residue. 2 cysteine pairs are disulfide-bonded: cysteine 208–cysteine 258 and cysteine 247–cysteine 270. 2 residues coordinate Cu(2+): histidine 240 and histidine 241. Residues histidine 308, histidine 386, and histidine 388 each coordinate Cu(2+). 3 disulfide bridges follow: cysteine 365–cysteine 477, cysteine 369–cysteine 534, and cysteine 440–cysteine 462. The active site involves histidine 386. Asparagine 449 is a glycosylation site (N-linked (GlcNAc...) asparagine). Cu(2+) is bound at residue methionine 461. An N-linked (GlcNAc...) asparagine glycan is attached at asparagine 483.

This sequence belongs to the copper type II ascorbate-dependent monooxygenase family. Requires Cu(2+) as cofactor.

Its subcellular location is the cytoplasmic vesicle. It localises to the secretory vesicle. The protein localises to the synaptic vesicle. It catalyses the reaction tyramine + L-ascorbate + O2 = (R)-octopamine + L-dehydroascorbate + H2O. Functionally, catalyzes the hydroxylation of tyramine into octopamine, a neurotransmitter involved in pharyngeal pumping and egg laying. In Caenorhabditis briggsae, this protein is Tyramine beta-hydroxylase (tbh-1).